We begin with the raw amino-acid sequence, 869 residues long: Probable beta-glucosidase F (869 aa).

An N-terminal signal peptide occupies residues 1-19; the sequence is MRVLSAIALVASLASSALS. N-linked (GlcNAc...) asparagine glycans are attached at residues Asn-77 and Asn-261. Asp-289 is an active-site residue. 4 N-linked (GlcNAc...) asparagine glycosylation sites follow: Asn-332, Asn-364, Asn-399, and Asn-478. The disordered stretch occupies residues 677 to 697; it reads STYPPTRPPKGPTPTYPTAIP. Over residues 681–691 the composition is skewed to pro residues; it reads PTRPPKGPTPT. The N-linked (GlcNAc...) asparagine glycan is linked to Asn-728.

The protein belongs to the glycosyl hydrolase 3 family.

The protein resides in the secreted. The catalysed reaction is Hydrolysis of terminal, non-reducing beta-D-glucosyl residues with release of beta-D-glucose.. It functions in the pathway glycan metabolism; cellulose degradation. Beta-glucosidases are one of a number of cellulolytic enzymes involved in the degradation of cellulosic biomass. Catalyzes the last step releasing glucose from the inhibitory cellobiose. In Aspergillus fumigatus (strain CBS 144.89 / FGSC A1163 / CEA10) (Neosartorya fumigata), this protein is Probable beta-glucosidase F (bglF).